We begin with the raw amino-acid sequence, 428 residues long: Phosphoglucosamine mutase (428 aa).

Ser96 acts as the Phosphoserine intermediate in catalysis. Positions 96, 229, 231, and 233 each coordinate Mg(2+). The residue at position 96 (Ser96) is a Phosphoserine.

This sequence belongs to the phosphohexose mutase family. Requires Mg(2+) as cofactor. In terms of processing, activated by phosphorylation.

The enzyme catalyses alpha-D-glucosamine 1-phosphate = D-glucosamine 6-phosphate. Catalyzes the conversion of glucosamine-6-phosphate to glucosamine-1-phosphate. The protein is Phosphoglucosamine mutase of Thermotoga neapolitana (strain ATCC 49049 / DSM 4359 / NBRC 107923 / NS-E).